The primary structure comprises 261 residues: Tryptophan synthase alpha chain (261 aa).

Residues Glu-49 and Asp-60 each act as proton acceptor in the active site.

This sequence belongs to the TrpA family. As to quaternary structure, tetramer of two alpha and two beta chains.

It carries out the reaction (1S,2R)-1-C-(indol-3-yl)glycerol 3-phosphate + L-serine = D-glyceraldehyde 3-phosphate + L-tryptophan + H2O. It participates in amino-acid biosynthesis; L-tryptophan biosynthesis; L-tryptophan from chorismate: step 5/5. In terms of biological role, the alpha subunit is responsible for the aldol cleavage of indoleglycerol phosphate to indole and glyceraldehyde 3-phosphate. This is Tryptophan synthase alpha chain from Roseiflexus castenholzii (strain DSM 13941 / HLO8).